A 442-amino-acid polypeptide reads, in one-letter code: Metacaspase-5 (442 aa).

The first 18 residues, 1–18 (MDLLLGVLSSGILQNALP), serve as a signal peptide directing secretion. An important for catalytic activity region spans residues 19–62 (FVAGVGRVKRPKRVKLEEAFREAHLCRPVIPYRAPTPYTGGRVK). N-linked (GlcNAc...) asparagine glycans are attached at residues Asn69 and Asn112. The active site involves His146. Ca(2+)-binding residues include Asp161, Asp177, and Asp178. Residue Cys201 is part of the active site. Residue Asp208 coordinates Ca(2+). Residues Asn234, Asn257, Asn282, and Asn331 are each glycosylated (N-linked (GlcNAc...) asparagine). The tract at residues 336-442 (HYVPQQYLQP…QYLSGVGKPL (107 aa)) is negatively regulates catalytic activity. Pro residues predominate over residues 348–371 (PPQPYYPPPQPQQPYYPPPQPQQP). Positions 348-442 (PPQPYYPPPQ…QYLSGVGKPL (95 aa)) are disordered. The span at 372-382 (YYPSSQLPTQY) shows a compositional bias: low complexity. Residues 422 to 434 (PSDQSTYYSSAQY) show a composition bias toward polar residues.

It belongs to the peptidase C14B family. In terms of processing, in epimastigotes, the unprocessed enzyme appears to be the main form. Auto-processing is dispensable for catalytic activity towards small oligopeptide substrates.

It localises to the recycling endosome. Activated by Ca(2+). Cysteine protease that cleaves specifically after arginine or lysine residues. May play a role in apoptosis. The chain is Metacaspase-5 from Trypanosoma cruzi (strain CL Brener).